The sequence spans 1047 residues: Helicase-like transcription factor CHR27 (1047 aa).

The span at 1-11 (MDSAIEISSGS) shows a compositional bias: low complexity. Disordered stretches follow at residues 1 to 89 (MDSA…SGSG), 103 to 130 (RTLPPSFNSPPLPARSGTNNISNASGSR), and 145 to 174 (KRTLPPSFNPPPLPSRSGTNNIRNAGGSRF). 2 stretches are compositionally biased toward polar residues: residues 52–88 (TNQAPPNGASSDTSRPGVSKPFTGNGNTVNSRISSGS) and 118–128 (SGTNNISNASG). The Helicase ATP-binding domain maps to 296 to 597 (ETSSFNCPGG…YSYFRFLRYD (302 aa)). 309 to 316 (DDQGLGKT) provides a ligand contact to ATP. 2 disordered regions span residues 349–407 (ADDE…TRAF) and 511–533 (VGASKKSKRRGRKSTNDTSSEPD). Basic and acidic residues predominate over residues 354–368 (DNAKHESGSHVKPEL). Residues 370-379 (VSSNSETSVL) show a composition bias toward polar residues. Residues 385 to 400 (DENDSSDMEKAEDEEA) are compositionally biased toward acidic residues. Residues 511–523 (VGASKKSKRRGRK) are compositionally biased toward basic residues. An RING-type; degenerate zinc finger spans residues 751-790 (CYECNEPPEKPVVTLCGHIFCYECVLEYITGDENTCPVPR). Polar residues predominate over residues 851–868 (QPDSPNSAQHGQMPSSSR). Residues 851–873 (QPDSPNSAQHGQMPSSSRPYDDD) form a disordered region. The 156-residue stretch at 887–1042 (SPSQGAVKTI…ATRLTVDDLK (156 aa)) folds into the Helicase C-terminal domain.

The protein belongs to the SNF2/RAD54 helicase family. RAD16 subfamily. As to quaternary structure, interacts with SUVR2. Interacts with itself.

The protein localises to the nucleus. Probable helicase-like transcription factor involved in transcriptional gene silencing. Associates with SUVR2 and contributes to transcriptional gene silencing at RNA-directed DNA methylation (RdDM) target loci but also at RdDM-independent target loci. May be involved in nucleosome positioning to form ordered nucleosome arrays on chromatin. Associates with SUVR2 and functions redundantly with FRG2. Required for the efficient methylation of a broad range of RdDM target loci. This is Helicase-like transcription factor CHR27 from Arabidopsis thaliana (Mouse-ear cress).